Consider the following 421-residue polypeptide: Indole-3-pyruvate monooxygenase YUCCA8 (421 aa).

30–35 (GAGPSG) contacts FAD. 201–206 (GCGNSG) provides a ligand contact to NADP(+).

Belongs to the FMO family. FAD is required as a cofactor. As to expression, expressed in organs undergoing active growth and cell division.

It localises to the endoplasmic reticulum. It catalyses the reaction indole-3-pyruvate + NADPH + O2 + H(+) = (indol-3-yl)acetate + CO2 + NADP(+) + H2O. In terms of biological role, involved in auxin biosynthesis. Converts the indole-3-pyruvic acid (IPA) produced by the TAA family to indole-3-acetic acid (IAA). Seems not able to use tryptamine (TAM) as substrate. Probably responsible for auxin biosynthesis in leaves and involved in the regulation of lateral leaf growth. Required for maintaining water homeostasis and an appropriate root to shoot ratio. Required for the inhibition of root growth by ethylene in etiolated seedlings. Functions downstream of the ethylene-response transcription factor EIL1. The protein is Indole-3-pyruvate monooxygenase YUCCA8 of Oryza sativa subsp. indica (Rice).